The chain runs to 547 residues: Chaperonin GroEL (547 aa).

Residues threonine 30–proline 33, lysine 51, aspartate 87–threonine 91, glycine 415, asparagine 479–alanine 481, and aspartate 495 contribute to the ATP site.

Belongs to the chaperonin (HSP60) family. In terms of assembly, forms a cylinder of 14 subunits composed of two heptameric rings stacked back-to-back. Interacts with the co-chaperonin GroES.

The protein resides in the cytoplasm. The catalysed reaction is ATP + H2O + a folded polypeptide = ADP + phosphate + an unfolded polypeptide.. Together with its co-chaperonin GroES, plays an essential role in assisting protein folding. The GroEL-GroES system forms a nano-cage that allows encapsulation of the non-native substrate proteins and provides a physical environment optimized to promote and accelerate protein folding. This is Chaperonin GroEL from Cupriavidus pinatubonensis (strain JMP 134 / LMG 1197) (Cupriavidus necator (strain JMP 134)).